The primary structure comprises 209 residues: Ribonuclease HII (209 aa).

In terms of domain architecture, RNase H type-2 spans 18–209; that stretch reads GLVAGVDEVG…FKPVKALLER (192 aa). The a divalent metal cation site is built by aspartate 24, glutamate 25, and aspartate 116.

Belongs to the RNase HII family. It depends on Mn(2+) as a cofactor. Mg(2+) serves as cofactor.

It is found in the cytoplasm. The catalysed reaction is Endonucleolytic cleavage to 5'-phosphomonoester.. In terms of biological role, endonuclease that specifically degrades the RNA of RNA-DNA hybrids. The polypeptide is Ribonuclease HII (Shewanella sp. (strain MR-7)).